Reading from the N-terminus, the 126-residue chain is Large ribosomal subunit protein bL19 (126 aa).

This sequence belongs to the bacterial ribosomal protein bL19 family.

Functionally, this protein is located at the 30S-50S ribosomal subunit interface and may play a role in the structure and function of the aminoacyl-tRNA binding site. This is Large ribosomal subunit protein bL19 from Bordetella bronchiseptica (strain ATCC BAA-588 / NCTC 13252 / RB50) (Alcaligenes bronchisepticus).